A 185-amino-acid polypeptide reads, in one-letter code: Dihydrofolate reductase (185 aa).

In terms of domain architecture, DHFR spans 5-184 (KLNLIAAACD…ISYYFRVYKK (180 aa)). NADP(+)-binding positions include Ala-11 and 17–23 (GIGVNGA). Residue 31–36 (EMAYFT) coordinates substrate. 55-57 (RRT) is a binding site for NADP(+). Substrate is bound at residue Arg-71. Residues 77–79 (THN) and 117–124 (GGSSIYRA) each bind NADP(+).

Belongs to the dihydrofolate reductase family.

The enzyme catalyses (6S)-5,6,7,8-tetrahydrofolate + NADP(+) = 7,8-dihydrofolate + NADPH + H(+). The protein operates within cofactor biosynthesis; tetrahydrofolate biosynthesis; 5,6,7,8-tetrahydrofolate from 7,8-dihydrofolate: step 1/1. Its activity is regulated as follows. Activated by dithiothreitol and p-chloromercuribenzoate. Inhibited by trimethoprim, methotrexate, sodium tetrathionate and hydroxymercuribenzoate. Key enzyme in folate metabolism. Catalyzes an essential reaction for de novo glycine and purine synthesis, and for DNA precursor synthesis. This is Dihydrofolate reductase (DHFR) from Heliothis virescens (Tobacco budworm moth).